We begin with the raw amino-acid sequence, 410 residues long: Na(+)-translocating NADH-quinone reductase subunit B (410 aa).

The next 3 membrane-spanning stretches (helical) occupy residues 56-76 (MMIL…YNVG), 119-139 (LFGA…GGFW), and 159-179 (SILF…ALGI). Threonine 232 is subject to FMN phosphoryl threonine. Transmembrane regions (helical) follow at residues 266 to 286 (GSIG…IVFA), 293 to 313 (IIAG…FIGS), 318 to 338 (MFAM…GMLF), 347 to 367 (SFTN…CVLI), and 377 to 397 (GMML…YFVA).

It belongs to the NqrB/RnfD family. As to quaternary structure, composed of six subunits; NqrA, NqrB, NqrC, NqrD, NqrE and NqrF. It depends on FMN as a cofactor.

It localises to the cell inner membrane. It carries out the reaction a ubiquinone + n Na(+)(in) + NADH + H(+) = a ubiquinol + n Na(+)(out) + NAD(+). Its function is as follows. NQR complex catalyzes the reduction of ubiquinone-1 to ubiquinol by two successive reactions, coupled with the transport of Na(+) ions from the cytoplasm to the periplasm. NqrA to NqrE are probably involved in the second step, the conversion of ubisemiquinone to ubiquinol. In Neisseria meningitidis serogroup B (strain ATCC BAA-335 / MC58), this protein is Na(+)-translocating NADH-quinone reductase subunit B.